Reading from the N-terminus, the 440-residue chain is Glycerol-3-phosphate dehydrogenase [NAD(+)] 2, mitochondrial (440 aa).

The N-terminal 16 residues, 1–16 (MLAVRRLTRYTFLKRT), are a transit peptide targeting the mitochondrion. 3 positions are modified to phosphoserine: Ser-70, Ser-72, and Ser-75. NAD(+)-binding positions include 90–95 (GSGNWG), Phe-122, and Phe-178. Lys-201 is a substrate binding site. Ala-234 is a binding site for NAD(+). Lys-294 acts as the Proton acceptor in catalysis. Residues Arg-359 and Gln-388 each contribute to the NAD(+) site. A substrate-binding site is contributed by 359–360 (RN).

Belongs to the NAD-dependent glycerol-3-phosphate dehydrogenase family.

It is found in the cytoplasm. The protein resides in the mitochondrion. The catalysed reaction is sn-glycerol 3-phosphate + NAD(+) = dihydroxyacetone phosphate + NADH + H(+). Its function is as follows. Catalyzes the production of glycerol under anaerobic growth conditions. Glycerol production serves as a redox sink by consuming the excess cytosolic NADH during anaerobic metabolism. This chain is Glycerol-3-phosphate dehydrogenase [NAD(+)] 2, mitochondrial, found in Saccharomyces cerevisiae (strain ATCC 204508 / S288c) (Baker's yeast).